A 953-amino-acid polypeptide reads, in one-letter code: Nonsense-mediated mRNA decay factor SMG8 (953 aa).

2 disordered regions span residues 571-604 (AQDAELDPDEEDEELPTGEREEQHITQSNGCSQP) and 629-653 (PCFDQSSSSEAESTCSGTSSEESNN). Residues 574–586 (AELDPDEEDEELP) are compositionally biased toward acidic residues. Over residues 595–604 (ITQSNGCSQP) the composition is skewed to polar residues. Residues 634 to 653 (SSSSEAESTCSGTSSEESNN) show a composition bias toward low complexity.

The protein belongs to the SMG8 family.

Functionally, involved in nonsense-mediated decay (NMD) of mRNAs containing premature stop codons. Probable component of kinase complex containing nonC and recruited to stalled ribosomes. This chain is Nonsense-mediated mRNA decay factor SMG8, found in Drosophila persimilis (Fruit fly).